The following is a 442-amino-acid chain: GPI mannosyltransferase 1 (442 aa).

8 helical membrane passes run 22–42 (INLT…LIVF), 95–115 (ILIH…IIAY), 177–197 (LASI…IYSI), 242–262 (AFTF…IFLF), 307–327 (MIVA…ITLV), 336–356 (LLLE…QYFI), 361–381 (ILPL…ILFA), and 408–428 (IWVA…KLIL).

Belongs to the PIGM family.

It localises to the endoplasmic reticulum membrane. The protein operates within glycolipid biosynthesis; glycosylphosphatidylinositol-anchor biosynthesis. Its function is as follows. Mannosyltransferase involved in glycosylphosphatidylinositol-anchor biosynthesis. Transfers the first alpha-1,4-mannose to GlcN-acyl-PI during GPI precursor assembly. The polypeptide is GPI mannosyltransferase 1 (pigm) (Dictyostelium discoideum (Social amoeba)).